The sequence spans 612 residues: Dihydroxy-acid dehydratase (612 aa).

A Mg(2+)-binding site is contributed by Asp81. Cys122 lines the [2Fe-2S] cluster pocket. The Mg(2+) site is built by Asp123 and Lys124. Lys124 carries the N6-carboxylysine modification. Residue Cys195 coordinates [2Fe-2S] cluster. Mg(2+) is bound at residue Glu491. Catalysis depends on Ser517, which acts as the Proton acceptor.

This sequence belongs to the IlvD/Edd family. In terms of assembly, homodimer. The cofactor is [2Fe-2S] cluster. Requires Mg(2+) as cofactor.

It carries out the reaction (2R)-2,3-dihydroxy-3-methylbutanoate = 3-methyl-2-oxobutanoate + H2O. The enzyme catalyses (2R,3R)-2,3-dihydroxy-3-methylpentanoate = (S)-3-methyl-2-oxopentanoate + H2O. The protein operates within amino-acid biosynthesis; L-isoleucine biosynthesis; L-isoleucine from 2-oxobutanoate: step 3/4. Its pathway is amino-acid biosynthesis; L-valine biosynthesis; L-valine from pyruvate: step 3/4. Functionally, functions in the biosynthesis of branched-chain amino acids. Catalyzes the dehydration of (2R,3R)-2,3-dihydroxy-3-methylpentanoate (2,3-dihydroxy-3-methylvalerate) into 2-oxo-3-methylpentanoate (2-oxo-3-methylvalerate) and of (2R)-2,3-dihydroxy-3-methylbutanoate (2,3-dihydroxyisovalerate) into 2-oxo-3-methylbutanoate (2-oxoisovalerate), the penultimate precursor to L-isoleucine and L-valine, respectively. The chain is Dihydroxy-acid dehydratase from Rhizobium etli (strain ATCC 51251 / DSM 11541 / JCM 21823 / NBRC 15573 / CFN 42).